Reading from the N-terminus, the 461-residue chain is uncharacterized protein (461 aa).

This is an uncharacterized protein from Saccharomyces cerevisiae (strain ATCC 204508 / S288c) (Baker's yeast).